A 388-amino-acid chain; its full sequence is Probable Na(+)/H(+) antiporter 3 (388 aa).

Transmembrane regions (helical) follow at residues Glu-2 to Leu-22, Ile-27 to Ile-47, Thr-53 to Val-73, Glu-81 to Tyr-101, Leu-102 to Ala-122, Ile-146 to Ile-166, Val-175 to Ser-195, Val-215 to Val-235, Ala-263 to Ile-283, Leu-294 to Leu-314, Thr-325 to Gly-345, and Glu-354 to Val-374.

Belongs to the monovalent cation:proton antiporter 1 (CPA1) transporter (TC 2.A.36) family.

The protein localises to the cell membrane. In terms of biological role, this is probably a Na(+)/H(+) antiporter. The chain is Probable Na(+)/H(+) antiporter 3 from Methanocaldococcus jannaschii (strain ATCC 43067 / DSM 2661 / JAL-1 / JCM 10045 / NBRC 100440) (Methanococcus jannaschii).